The primary structure comprises 258 residues: GTP cyclohydrolase FolE2 (258 aa).

Belongs to the GTP cyclohydrolase IV family.

The catalysed reaction is GTP + H2O = 7,8-dihydroneopterin 3'-triphosphate + formate + H(+). It functions in the pathway cofactor biosynthesis; 7,8-dihydroneopterin triphosphate biosynthesis; 7,8-dihydroneopterin triphosphate from GTP: step 1/1. Functionally, converts GTP to 7,8-dihydroneopterin triphosphate. This Lawsonia intracellularis (strain PHE/MN1-00) protein is GTP cyclohydrolase FolE2.